We begin with the raw amino-acid sequence, 1088 residues long: ATP-dependent helicase/deoxyribonuclease subunit B (1088 aa).

It belongs to the helicase family. AddB/RexB type 2 subfamily. Heterodimer of AddA and RexB. Requires Mg(2+) as cofactor.

In terms of biological role, the heterodimer acts as both an ATP-dependent DNA helicase and an ATP-dependent, dual-direction single-stranded exonuclease. Recognizes the chi site generating a DNA molecule suitable for the initiation of homologous recombination. This subunit has 5' -&gt; 3' nuclease activity but not helicase activity. The polypeptide is ATP-dependent helicase/deoxyribonuclease subunit B (Streptococcus suis (strain 98HAH33)).